The primary structure comprises 386 residues: Chaperone protein DnaJ (386 aa).

The J domain occupies 6–70 (DYYEVLGVDK…QKRAAYDQYG (65 aa)). Residues 141–223 (GKDTEVSYKR…CHGTGHEKKT (83 aa)) form a CR-type zinc finger. Positions 154, 157, 171, 174, 197, 200, 211, and 214 each coordinate Zn(2+). CXXCXGXG motif repeat units follow at residues 154–161 (CHTCGGNG), 171–178 (CHKCKGSG), 197–204 (CDVCHGTG), and 211–218 (CETCHGTG). Residues 363 to 386 (LTGQSTEEQQSEGFFDKMKDAFKK) form a disordered region. Residues 364 to 374 (TGQSTEEQQSE) show a composition bias toward polar residues. Basic and acidic residues predominate over residues 376–386 (FFDKMKDAFKK).

This sequence belongs to the DnaJ family. In terms of assembly, homodimer. The cofactor is Zn(2+).

The protein localises to the cytoplasm. Functionally, participates actively in the response to hyperosmotic and heat shock by preventing the aggregation of stress-denatured proteins and by disaggregating proteins, also in an autonomous, DnaK-independent fashion. Unfolded proteins bind initially to DnaJ; upon interaction with the DnaJ-bound protein, DnaK hydrolyzes its bound ATP, resulting in the formation of a stable complex. GrpE releases ADP from DnaK; ATP binding to DnaK triggers the release of the substrate protein, thus completing the reaction cycle. Several rounds of ATP-dependent interactions between DnaJ, DnaK and GrpE are required for fully efficient folding. Also involved, together with DnaK and GrpE, in the DNA replication of plasmids through activation of initiation proteins. This is Chaperone protein DnaJ from Tetragenococcus halophilus (Pediococcus halophilus).